A 116-amino-acid polypeptide reads, in one-letter code: MKNVVFSVLLLLSFLFCLANTNEAAVPCSTVDMKAAACVGFATGKDSKPSQACCTGLQQLAQTVKTVDDKKAICRCLKASSKSLGIKDQFLSKIPAACNIKVGFPVSTNTNCETIH.

A signal peptide spans 1–24 (MKNVVFSVLLLLSFLFCLANTNEA). 4 cysteine pairs are disulfide-bonded: cysteine 28/cysteine 76, cysteine 38/cysteine 53, cysteine 54/cysteine 98, and cysteine 74/cysteine 112.

Belongs to the plant LTP family.

In terms of biological role, plant non-specific lipid-transfer proteins transfer phospholipids as well as galactolipids across membranes. May play a role in wax or cutin deposition in the cell walls of expanding epidermal cells and certain secretory tissues. In Ricinus communis (Castor bean), this protein is Non-specific lipid-transfer protein C, cotyledon-specific isoform.